Here is a 331-residue protein sequence, read N- to C-terminus: DNA fragmentation factor subunit alpha (331 aa).

M1 bears the N-acetylmethionine mark. In terms of domain architecture, CIDE-N spans T17–Y96. A Phosphothreonine modification is found at T243. Residues S305–T331 are disordered. Phosphoserine is present on S315.

Heterodimer of DFFA and DFFB. Caspase-3 cleaves DFF45 at 2 sites to generate an active factor.

The protein resides in the cytoplasm. In terms of biological role, inhibitor of the caspase-activated DNase (DFF40). The sequence is that of DNA fragmentation factor subunit alpha (DFFA) from Homo sapiens (Human).